Here is a 212-residue protein sequence, read N- to C-terminus: Inner membrane-spanning protein YciB (212 aa).

5 consecutive transmembrane segments (helical) span residues 49-69, 78-98, 105-125, 150-170, and 178-198; these read APVL…VLYL, TMLW…IWFH, WKPS…PIVA, LAWA…AYNF, and FKAF…GLYM.

The protein belongs to the YciB family.

It localises to the cell inner membrane. In terms of biological role, plays a role in cell envelope biogenesis, maintenance of cell envelope integrity and membrane homeostasis. The polypeptide is Inner membrane-spanning protein YciB (Leptothrix cholodnii (strain ATCC 51168 / LMG 8142 / SP-6) (Leptothrix discophora (strain SP-6))).